Consider the following 317-residue polypeptide: Hairy/enhancer-of-split related with YRPW motif protein 1 (317 aa).

The tract at residues 1–59 is disordered; that stretch reads MKRNHDFSSSDSELDENIEVEKESADENAGANSPLGSMSPSTTSQVQARKRRRGIIEKR. Residues 30–47 are compositionally biased toward polar residues; the sequence is GANSPLGSMSPSTTSQVQ. The bHLH domain maps to 48–103; the sequence is ARKRRRGIIEKRRRDRINNSLSELRRLVPSAFEKQGSAKLEKAEILQMTVDHLKML. The Orange domain maps to 121–157; it reads YRGLGFRECLAETARYLSIIEGLDNTDPLRIRLVSHL. Composition is skewed to low complexity over residues 193 to 226 and 248 to 264; these read QQQQ…SAPS and PPST…TASK. A disordered region spans residues 193-264; sequence QQQQQQGAPL…PGLTPPTASK (72 aa). A YRPW motif motif is present at residues 307–310; that stretch reads YRPW.

Belongs to the HEY family.

The protein resides in the nucleus. Functionally, transcriptional repressor which functions as a downstream effector of Notch signaling. This is Hairy/enhancer-of-split related with YRPW motif protein 1 (hey1) from Danio rerio (Zebrafish).